Consider the following 432-residue polypeptide: MGNNVVVLGTQWGDEGKGKIVDLLTERAKYVVRYQGGHNAGHTLVINGEKTVLHLIPSGILRENVTSIIGNGVVLSPSALMKEMKELEDRGIPVRERLLLSEACPLILDYHVALDNAREKARGAKAIGTTGRGIGPAYEDKVARRGLRVGDLFDKETFAEKLKEVMEYHNFQLVNYYKAEAVDYQKVLDDTMAVADILTSMVVDVSDLLDQARQRGDFVMFEGAQGTLLDIDHGTYPYVTSSNTTAGGVATGSGLGPRYVDYVLGILKAYSTRVGAGPFPTELFDETGEFLCKQGNEYGATTGRRRRTGWLDTVAVRRAVQLNSLSGFCLTKLDVLDGLKEVKLCVAYRMPDGREVTTTPLAADDWKGVEPIYETMPGWSESTFGVKDRSGLPQAALNYIKRIEELTGVPIDIISTGPDRTETMILRDPFDA.

GTP contacts are provided by residues 13–19 and 41–43; these read GDEGKGK and GHT. D14 functions as the Proton acceptor in the catalytic mechanism. Mg(2+) is bound by residues D14 and G41. IMP contacts are provided by residues 14-17, 39-42, T130, R144, Q225, T240, and R304; these read DEGK and NAGH. H42 serves as the catalytic Proton donor. Substrate is bound at residue 300 to 306; the sequence is ATTGRRR. GTP is bound by residues R306, 332-334, and 415-417; these read KLD and STG.

Belongs to the adenylosuccinate synthetase family. In terms of assembly, homodimer. Requires Mg(2+) as cofactor.

The protein localises to the cytoplasm. It catalyses the reaction IMP + L-aspartate + GTP = N(6)-(1,2-dicarboxyethyl)-AMP + GDP + phosphate + 2 H(+). It functions in the pathway purine metabolism; AMP biosynthesis via de novo pathway; AMP from IMP: step 1/2. Functionally, plays an important role in the de novo pathway of purine nucleotide biosynthesis. Catalyzes the first committed step in the biosynthesis of AMP from IMP. The protein is Adenylosuccinate synthetase of Salmonella typhi.